The primary structure comprises 481 residues: Cysteine--tRNA ligase (481 aa).

Position 29 (cysteine 29) interacts with Zn(2+). The 'HIGH' region signature appears at 31 to 41 (PTTYDYIHLGN). Cysteine 209, histidine 234, and glutamate 238 together coordinate Zn(2+). Positions 267-271 (KMSKS) match the 'KMSKS' region motif. Residue lysine 270 participates in ATP binding.

Belongs to the class-I aminoacyl-tRNA synthetase family. In terms of assembly, monomer. It depends on Zn(2+) as a cofactor.

The protein resides in the cytoplasm. It carries out the reaction tRNA(Cys) + L-cysteine + ATP = L-cysteinyl-tRNA(Cys) + AMP + diphosphate. The chain is Cysteine--tRNA ligase from Heliobacterium modesticaldum (strain ATCC 51547 / Ice1).